The following is a 214-amino-acid chain: Methyltransferase HEMK2 (214 aa).

Residues Thr29, Glu51, Gly53, Asp77, Asp103, Leu104, and Asn122 each contribute to the S-adenosyl-L-methionine site. Position 122 (Asn122) interacts with a protein.

Belongs to the eukaryotic/archaeal PrmC-related family. As to quaternary structure, heterodimer; heterodimerization with TRMT112 is required for S-adenosyl-L-methionine-binding. Ubiquitinated, leading to its degradation by the proteasome. In terms of tissue distribution, highly expressed in undifferentiated embryonic stem cells (at protein level). Also expressed in testis and brain, weakly expressed in differentiated embryonic stem cells and kidney. Not expressed in muscle, heart, placenta, pancreas, lung and stomach.

Its subcellular location is the nucleus. It catalyses the reaction L-lysyl-[histone] + S-adenosyl-L-methionine = N(6)-methyl-L-lysyl-[histone] + S-adenosyl-L-homocysteine + H(+). The catalysed reaction is L-glutaminyl-[protein] + S-adenosyl-L-methionine = N(5)-methyl-L-glutaminyl-[protein] + S-adenosyl-L-homocysteine + H(+). It carries out the reaction methylarsonous acid + S-adenosyl-L-methionine = dimethylarsinate + S-adenosyl-L-homocysteine + 2 H(+). Functionally, methyltransferase that can methylate proteins and, to a lower extent, arsenic. Catalytic subunit of a heterodimer with TRMT112, which monomethylates 'Lys-12' of histone H4 (H4K12me1), a modification present at the promoters of numerous genes encoding cell cycle regulators. Catalytic subunit of a heterodimer with TRMT112, which catalyzes N5-methylation of Glu residue of proteins with a Gly-Gln-Xaa-Xaa-Xaa-Arg motif. Methylates ETF1 on 'Gln-185'; ETF1 needs to be complexed to ERF3 in its GTP-bound form to be efficiently methylated. May also play a role in the modulation of arsenic-induced toxicity by mediating the conversion of monomethylarsonous acid (3+) into the less toxic dimethylarsonic acid. It however only plays a limited role in arsenic metabolism compared with AS3MT. This is Methyltransferase HEMK2 from Mus musculus (Mouse).